The sequence spans 469 residues: Phosphoenolpyruvate carboxylase (469 aa).

Belongs to the PEPCase type 2 family. Homotetramer. Requires Mg(2+) as cofactor.

It catalyses the reaction oxaloacetate + phosphate = phosphoenolpyruvate + hydrogencarbonate. Functionally, catalyzes the irreversible beta-carboxylation of phosphoenolpyruvate (PEP) to form oxaloacetate (OAA), a four-carbon dicarboxylic acid source for the tricarboxylic acid cycle. The polypeptide is Phosphoenolpyruvate carboxylase (Pyrococcus horikoshii (strain ATCC 700860 / DSM 12428 / JCM 9974 / NBRC 100139 / OT-3)).